The primary structure comprises 490 residues: ATP-dependent 6-phosphofructokinase (490 aa).

ATP is bound by residues glycine 109, 175–176 (RG), and 200–203 (GDGT). Residue aspartate 201 participates in Mg(2+) binding. Substrate-binding positions include 229–231 (TID), 274–276 (MGR), glutamate 327, and 383–386 (YMIR). Aspartate 231 serves as the catalytic Proton acceptor. The Peroxisomal targeting signal motif lies at 488–490 (SKL).

This sequence belongs to the phosphofructokinase type A (PFKA) family. PPi-dependent PFK group II subfamily. Atypical ATP-dependent clade 'X' sub-subfamily. As to quaternary structure, homotetramer. Mg(2+) serves as cofactor.

Its subcellular location is the glycosome. The catalysed reaction is beta-D-fructose 6-phosphate + ATP = beta-D-fructose 1,6-bisphosphate + ADP + H(+). It functions in the pathway carbohydrate degradation; glycolysis; D-glyceraldehyde 3-phosphate and glycerone phosphate from D-glucose: step 3/4. With respect to regulation, allosterically activated by AMP. Functionally, catalyzes the phosphorylation of D-fructose 6-phosphate to fructose 1,6-bisphosphate by ATP, the first committing step of glycolysis. In Trypanoplasma borreli, this protein is ATP-dependent 6-phosphofructokinase.